Reading from the N-terminus, the 1181-residue chain is Integrin alpha-2 (1181 aa).

The N-terminal stretch at 1-29 (MGPERTGAAPLPLLLVLALSQGILNCCLA) is a signal peptide. At 30–1132 (YNVGLPEAKI…KPDEKAEVPT (1103 aa)) the chain is on the extracellular side. FG-GAP repeat units lie at residues 34–92 (LPEA…TATC) and 101–161 (TSIP…LSAS). A disulfide bridge connects residues cysteine 83 and cysteine 92. Asparagine 105, asparagine 112, and asparagine 343 each carry an N-linked (GlcNAc...) asparagine glycan. Positions 188–365 (WDAVKNFLEK…TLGEQIFSIE (178 aa)) constitute a VWFA domain. FG-GAP repeat units lie at residues 366 to 420 (GTVQ…LIFP), 423 to 475 (AFDQ…ENGN), 477 to 539 (TVIQ…ILGQ), 540 to 598 (HQFL…TIRT), and 602 to 664 (QKIL…FTPE). 3 N-linked (GlcNAc...) asparagine glycosylation sites follow: asparagine 432, asparagine 460, and asparagine 475. Ca(2+) contacts are provided by aspartate 499, aspartate 501, aspartate 503, aspartate 507, aspartate 563, asparagine 565, aspartate 567, aspartate 571, aspartate 627, asparagine 629, aspartate 631, and aspartate 635. 5 cysteine pairs are disulfide-bonded: cysteine 680-cysteine 737, cysteine 789-cysteine 795, cysteine 865-cysteine 876, cysteine 1019-cysteine 1050, and cysteine 1055-cysteine 1060. Asparagine 699 is a glycosylation site (N-linked (GlcNAc...) asparagine). 3 N-linked (GlcNAc...) asparagine glycosylation sites follow: asparagine 1057, asparagine 1074, and asparagine 1081. A helical membrane pass occupies residues 1133-1154 (GVIIGSIIAGILLLLALVAILW). The tract at residues 1155 to 1161 (KLGFFKR) is interaction with HPS5. Residues 1155–1181 (KLGFFKRKYEKMTKNPDEIDETTELSS) are Cytoplasmic-facing. A GFFKR motif motif is present at residues 1157–1161 (GFFKR).

Belongs to the integrin alpha chain family. As to quaternary structure, heterodimer of an alpha and a beta subunit. Alpha-2 associates with beta-1. Interacts with HPS5 and RAB21. In terms of assembly, (Microbial infection) Integrin ITGA2:ITGB1 interacts (via ITAG2 I-domain) with rotavirus A VP4 protein. (Microbial infection) Integrin ITGA2:ITGB1 interacts with human echoviruses 1 and 8 capsid proteins.

Its subcellular location is the membrane. In terms of biological role, integrin alpha-2/beta-1 is a receptor for laminin, collagen, collagen C-propeptides, fibronectin and E-cadherin. It recognizes the proline-hydroxylated sequence G-F-P-G-E-R in collagen. It is responsible for adhesion of platelets and other cells to collagens, modulation of collagen and collagenase gene expression, force generation and organization of newly synthesized extracellular matrix. (Microbial infection) Integrin ITGA2:ITGB1 acts as a receptor for Human rotavirus A. Functionally, (Microbial infection) Integrin ITGA2:ITGB1 acts as a receptor for Human echoviruses 1 and 8. In Homo sapiens (Human), this protein is Integrin alpha-2 (ITGA2).